Here is a 259-residue protein sequence, read N- to C-terminus: Caffeoyl-CoA O-methyltransferase 1 (259 aa).

Residues 1–14 (MATTTTEATKTSST) show a composition bias toward low complexity. Residues 1 to 29 (MATTTTEATKTSSTNGEDQKQSQNLRHQE) form a disordered region. Alanine 2 carries the post-translational modification N-acetylalanine. Lysine 33 is a binding site for substrate. S-adenosyl-L-methionine is bound by residues threonine 75, glutamate 97, 99–100 (GV), serine 105, aspartate 123, and alanine 152. A substrate-binding site is contributed by aspartate 175. Aspartate 175 is a binding site for a divalent metal cation. Residue aspartate 177 coordinates S-adenosyl-L-methionine. A divalent metal cation contacts are provided by aspartate 201 and asparagine 202. Asparagine 206 lines the substrate pocket.

The protein belongs to the class I-like SAM-binding methyltransferase superfamily. Cation-dependent O-methyltransferase family. CCoAMT subfamily. Requires a divalent metal cation as cofactor. In terms of tissue distribution, expressed in stems and roots. Detected in leaves, siliques, flower buds, flowers. Expressed in the tapetum, but not in the endothecium. Detected in the vascular system of leaves and all flower organs, including stigma, stamens, petals and sepals.

It catalyses the reaction (E)-caffeoyl-CoA + S-adenosyl-L-methionine = (E)-feruloyl-CoA + S-adenosyl-L-homocysteine + H(+). It participates in aromatic compound metabolism; phenylpropanoid biosynthesis. In terms of biological role, methylates caffeoyl-CoA to feruloyl-CoA. Has a very low activity with caffeic acid and esculetin. Involved in scopoletin biosynthesis in roots. This Arabidopsis thaliana (Mouse-ear cress) protein is Caffeoyl-CoA O-methyltransferase 1 (CCOAOMT1).